A 149-amino-acid polypeptide reads, in one-letter code: Large ribosomal subunit protein bL9 (149 aa).

It belongs to the bacterial ribosomal protein bL9 family.

Functionally, binds to the 23S rRNA. The chain is Large ribosomal subunit protein bL9 from Aliivibrio salmonicida (strain LFI1238) (Vibrio salmonicida (strain LFI1238)).